We begin with the raw amino-acid sequence, 320 residues long: UV DNA damage endonuclease (320 aa).

Belongs to the uve1/UvsE family.

Functionally, component in a DNA repair pathway. Removal of UV LIGHT damaged nucleotides. Recognizes pyrimidine dimers and cleave a phosphodiester bond immediately 5' to the lesion. The polypeptide is UV DNA damage endonuclease (Bacillus pumilus (strain SAFR-032)).